We begin with the raw amino-acid sequence, 344 residues long: Lipase chaperone (344 aa).

Residues 13-35 traverse the membrane as a helical segment; sequence RIAPYGAAGLAAIVGVAIWSGTG.

It belongs to the lipase chaperone family.

Its subcellular location is the cell inner membrane. In terms of biological role, may be involved in the folding of the extracellular lipase during its passage through the periplasm. This Burkholderia vietnamiensis (strain G4 / LMG 22486) (Burkholderia cepacia (strain R1808)) protein is Lipase chaperone.